We begin with the raw amino-acid sequence, 987 residues long: Nuclear matrix constituent protein 1b (987 aa).

The interval 1-25 (MASPRSAGGVGGGGGGGGGSGGAAA) is disordered. The span at 8 to 24 (GGVGGGGGGGGGSGGAA) shows a compositional bias: gly residues. 2 coiled-coil regions span residues 403-545 (LAEL…ERRA) and 594-717 (LSKI…DREA). 2 stretches are compositionally biased toward basic and acidic residues: residues 752-764 (SDINVKDNHHDNS) and 898-908 (CKEHEYGDKGP). Disordered regions lie at residues 752–775 (SDINVKDNHHDNSHSSPKQRFGRK) and 887–987 (HDEA…FLIT). Positions 944 to 954 (ATVSATETSNV) are enriched in polar residues. Positions 956–973 (GPEDNNDSDEEDEEEEEE) are enriched in acidic residues.

This sequence belongs to the CRWN family. In terms of assembly, interacts with SWI3C.

It localises to the nucleus matrix. It is found in the nucleus lamina. Functionally, architectural component of nuclear structure that plays different roles in controlling nuclear size and morphology. Involved in the modification of chromatin accessibility by interacting with SWI3C, a component of the chromatin-remodeling complex, to thus reduce the suppression effect of the complex. Acts as positive regulator of drought resistance and modulates root growth. Positively regulates the expression of genes related to root growth and drought resistance. The sequence is that of Nuclear matrix constituent protein 1b from Oryza sativa subsp. japonica (Rice).